The primary structure comprises 31 residues: Maltose/maltodextrin import ATP-binding protein MalK (31 aa).

Belongs to the ABC transporter superfamily. Maltooligosaccharide importer (TC 3.A.1.1.1) family. As to quaternary structure, the complex is composed of two ATP-binding proteins (MalK), two transmembrane proteins (MalG and MalK) and a solute-binding protein (MalE).

Its subcellular location is the cell inner membrane. It carries out the reaction D-maltose(out) + ATP + H2O = D-maltose(in) + ADP + phosphate + H(+). Part of the ABC transporter complex MalEFGK involved in maltose/maltodextrin import. Responsible for energy coupling to the transport system. The sequence is that of Maltose/maltodextrin import ATP-binding protein MalK from Photorhabdus luminescens (Xenorhabdus luminescens).